We begin with the raw amino-acid sequence, 126 residues long: uncharacterized protein (126 aa).

2 stretches are compositionally biased toward basic residues: residues Arg-21 to Arg-31 and Arg-41 to Arg-83. Positions Arg-21 to Arg-83 are disordered.

This is an uncharacterized protein from Saccharomyces cerevisiae (strain ATCC 204508 / S288c) (Baker's yeast).